A 429-amino-acid chain; its full sequence is 3-phosphoshikimate 1-carboxyvinyltransferase (429 aa).

3 residues coordinate 3-phosphoshikimate: Lys-21, Ser-22, and Arg-26. Lys-21 serves as a coordination point for phosphoenolpyruvate. Positions 94 and 122 each coordinate phosphoenolpyruvate. Residues Ser-167, Gln-169, Asp-315, and Lys-342 each coordinate 3-phosphoshikimate. Gln-169 serves as a coordination point for phosphoenolpyruvate. Residue Asp-315 is the Proton acceptor of the active site. Phosphoenolpyruvate-binding residues include Arg-346 and Arg-388.

The protein belongs to the EPSP synthase family. Monomer.

Its subcellular location is the cytoplasm. It catalyses the reaction 3-phosphoshikimate + phosphoenolpyruvate = 5-O-(1-carboxyvinyl)-3-phosphoshikimate + phosphate. Its pathway is metabolic intermediate biosynthesis; chorismate biosynthesis; chorismate from D-erythrose 4-phosphate and phosphoenolpyruvate: step 6/7. Its function is as follows. Catalyzes the transfer of the enolpyruvyl moiety of phosphoenolpyruvate (PEP) to the 5-hydroxyl of shikimate-3-phosphate (S3P) to produce enolpyruvyl shikimate-3-phosphate and inorganic phosphate. This chain is 3-phosphoshikimate 1-carboxyvinyltransferase, found in Desulforamulus reducens (strain ATCC BAA-1160 / DSM 100696 / MI-1) (Desulfotomaculum reducens).